Here is a 276-residue protein sequence, read N- to C-terminus: Pantothenate synthetase (276 aa).

26-33 (MGFLHAGH) is an ATP binding site. Histidine 33 functions as the Proton donor in the catalytic mechanism. Glutamine 57 lines the (R)-pantoate pocket. Residue glutamine 57 coordinates beta-alanine. 143-146 (GQKD) provides a ligand contact to ATP. Residue glutamine 149 coordinates (R)-pantoate. Residues isoleucine 172 and 180 to 183 (MSSR) each bind ATP.

The protein belongs to the pantothenate synthetase family. In terms of assembly, homodimer.

It localises to the cytoplasm. It carries out the reaction (R)-pantoate + beta-alanine + ATP = (R)-pantothenate + AMP + diphosphate + H(+). It functions in the pathway cofactor biosynthesis; (R)-pantothenate biosynthesis; (R)-pantothenate from (R)-pantoate and beta-alanine: step 1/1. Its function is as follows. Catalyzes the condensation of pantoate with beta-alanine in an ATP-dependent reaction via a pantoyl-adenylate intermediate. This chain is Pantothenate synthetase, found in Herpetosiphon aurantiacus (strain ATCC 23779 / DSM 785 / 114-95).